The following is a 94-amino-acid chain: Cell division topological specificity factor (94 aa).

Belongs to the MinE family.

In terms of biological role, prevents the cell division inhibition by proteins MinC and MinD at internal division sites while permitting inhibition at polar sites. This ensures cell division at the proper site by restricting the formation of a division septum at the midpoint of the long axis of the cell. The protein is Cell division topological specificity factor of Alkalilimnicola ehrlichii (strain ATCC BAA-1101 / DSM 17681 / MLHE-1).